We begin with the raw amino-acid sequence, 239 residues long: tRNA (guanine-N(7)-)-methyltransferase (239 aa).

S-adenosyl-L-methionine-binding positions include glycine 64, 87–88 (EI), 120–121 (NA), and leucine 140. Aspartate 143 is an active-site residue. Position 218 to 220 (218 to 220 (SEE)) interacts with S-adenosyl-L-methionine.

The protein belongs to the class I-like SAM-binding methyltransferase superfamily. TrmB family.

It is found in the nucleus. The catalysed reaction is guanosine(46) in tRNA + S-adenosyl-L-methionine = N(7)-methylguanosine(46) in tRNA + S-adenosyl-L-homocysteine. Its pathway is tRNA modification; N(7)-methylguanine-tRNA biosynthesis. Catalyzes the formation of N(7)-methylguanine at position 46 (m7G46) in tRNA. In Culex quinquefasciatus (Southern house mosquito), this protein is tRNA (guanine-N(7)-)-methyltransferase.